The following is a 328-amino-acid chain: Beta-ribofuranosylphenol 5'-phosphate synthase (328 aa).

Belongs to the beta-RFA-P synthase family. Homodimer. Mg(2+) serves as cofactor.

It carries out the reaction 5-phospho-alpha-D-ribose 1-diphosphate + 4-hydroxybenzoate + H(+) = 4-(beta-D-ribofuranosyl)phenol 5'-phosphate + CO2 + diphosphate. The enzyme catalyses 4-aminobenzoate + 5-phospho-alpha-D-ribose 1-diphosphate + H(+) = 4-(beta-D-ribofuranosyl)aminobenzene 5'-phosphate + CO2 + diphosphate. Its pathway is cofactor biosynthesis; 5,6,7,8-tetrahydromethanopterin biosynthesis. Its function is as follows. Catalyzes the condensation of 4-hydroxybenzoate (HB) with 5-phospho-alpha-D-ribose 1-diphosphate (PRPP) to produce beta-ribofuranosylphenol 5'-phosphate (beta-RFH-P). Also catalyzes the condensation of 4-aminobenzoate (pABA) with PRPP to produce beta-ribofuranosylaminobenzene 5'-phosphate (beta-RFA-P). Only 4-hydroxybenzoate is known to be biosynthesized by methanogenic archaea, but 4-aminobenzoate can be used as substrate by growing methanogens when it is present in the growth medium. The polypeptide is Beta-ribofuranosylphenol 5'-phosphate synthase (Methanocaldococcus jannaschii (strain ATCC 43067 / DSM 2661 / JAL-1 / JCM 10045 / NBRC 100440) (Methanococcus jannaschii)).